We begin with the raw amino-acid sequence, 214 residues long: Large ribosomal subunit protein bL25 (214 aa).

Residues I189–D214 form a disordered region. Over residues D198–D214 the composition is skewed to acidic residues.

The protein belongs to the bacterial ribosomal protein bL25 family. CTC subfamily. Part of the 50S ribosomal subunit; part of the 5S rRNA/L5/L18/L25 subcomplex. Contacts the 5S rRNA. Binds to the 5S rRNA independently of L5 and L18.

Its function is as follows. This is one of the proteins that binds to the 5S RNA in the ribosome where it forms part of the central protuberance. The sequence is that of Large ribosomal subunit protein bL25 from Alkalilimnicola ehrlichii (strain ATCC BAA-1101 / DSM 17681 / MLHE-1).